Consider the following 361-residue polypeptide: Phosphoserine aminotransferase (361 aa).

Arg42 is an L-glutamate binding site. Residues 76 to 77 (AR), Trp102, Thr153, Asp173, and Gln196 contribute to the pyridoxal 5'-phosphate site. Lys197 is subject to N6-(pyridoxal phosphate)lysine. Residue 238–239 (NT) participates in pyridoxal 5'-phosphate binding.

It belongs to the class-V pyridoxal-phosphate-dependent aminotransferase family. SerC subfamily. In terms of assembly, homodimer. Pyridoxal 5'-phosphate is required as a cofactor.

It localises to the cytoplasm. It catalyses the reaction O-phospho-L-serine + 2-oxoglutarate = 3-phosphooxypyruvate + L-glutamate. The enzyme catalyses 4-(phosphooxy)-L-threonine + 2-oxoglutarate = (R)-3-hydroxy-2-oxo-4-phosphooxybutanoate + L-glutamate. The protein operates within amino-acid biosynthesis; L-serine biosynthesis; L-serine from 3-phospho-D-glycerate: step 2/3. It participates in cofactor biosynthesis; pyridoxine 5'-phosphate biosynthesis; pyridoxine 5'-phosphate from D-erythrose 4-phosphate: step 3/5. In terms of biological role, catalyzes the reversible conversion of 3-phosphohydroxypyruvate to phosphoserine and of 3-hydroxy-2-oxo-4-phosphonooxybutanoate to phosphohydroxythreonine. This is Phosphoserine aminotransferase from Pectobacterium atrosepticum (strain SCRI 1043 / ATCC BAA-672) (Erwinia carotovora subsp. atroseptica).